Consider the following 144-residue polypeptide: UPF0299 membrane protein MS1271 (144 aa).

4 helical membrane-spanning segments follow: residues 5-25, 28-48, 57-77, and 92-112; these read IFLF…GEGI, LIPI…IGLT, VFFG…PVSV, and SLLI…GFLG.

The protein belongs to the UPF0299 family.

Its subcellular location is the cell inner membrane. The polypeptide is UPF0299 membrane protein MS1271 (Mannheimia succiniciproducens (strain KCTC 0769BP / MBEL55E)).